A 210-amino-acid chain; its full sequence is Large ribosomal subunit protein uL3 (210 aa).

The segment at 126-150 is disordered; sequence VSATHGSHRNHRKPGSVGASSTPSR.

The protein belongs to the universal ribosomal protein uL3 family. As to quaternary structure, part of the 50S ribosomal subunit. Forms a cluster with proteins L14 and L19.

Its function is as follows. One of the primary rRNA binding proteins, it binds directly near the 3'-end of the 23S rRNA, where it nucleates assembly of the 50S subunit. This is Large ribosomal subunit protein uL3 from Tropheryma whipplei (strain TW08/27) (Whipple's bacillus).